A 570-amino-acid polypeptide reads, in one-letter code: Sulfite reductase [NADPH] hemoprotein beta-component (570 aa).

Residues C434, C440, C479, and C483 each contribute to the [4Fe-4S] cluster site. Siroheme is bound at residue C483.

Belongs to the nitrite and sulfite reductase 4Fe-4S domain family. In terms of assembly, alpha(8)-beta(8). The alpha component is a flavoprotein, the beta component is a hemoprotein. Requires siroheme as cofactor. [4Fe-4S] cluster is required as a cofactor.

It carries out the reaction hydrogen sulfide + 3 NADP(+) + 3 H2O = sulfite + 3 NADPH + 4 H(+). It participates in sulfur metabolism; hydrogen sulfide biosynthesis; hydrogen sulfide from sulfite (NADPH route): step 1/1. In terms of biological role, component of the sulfite reductase complex that catalyzes the 6-electron reduction of sulfite to sulfide. This is one of several activities required for the biosynthesis of L-cysteine from sulfate. This Escherichia coli O127:H6 (strain E2348/69 / EPEC) protein is Sulfite reductase [NADPH] hemoprotein beta-component.